Here is a 396-residue protein sequence, read N- to C-terminus: Elongation factor Tu (396 aa).

The tr-type G domain occupies 10–206 (KPHVNIGTIG…AVDESVPDPI (197 aa)). The G1 stretch occupies residues 19–26 (GHVDHGKT). Residue 19-26 (GHVDHGKT) participates in GTP binding. Residue threonine 26 participates in Mg(2+) binding. The tract at residues 62 to 66 (GITIN) is G2. The segment at 83–86 (DAPG) is G3. GTP-binding positions include 83–87 (DAPGH) and 138–141 (NKSD). The segment at 138–141 (NKSD) is G4. Residues 176-178 (SGL) form a G5 region.

The protein belongs to the TRAFAC class translation factor GTPase superfamily. Classic translation factor GTPase family. EF-Tu/EF-1A subfamily. In terms of assembly, monomer.

It is found in the cytoplasm. It catalyses the reaction GTP + H2O = GDP + phosphate + H(+). Functionally, GTP hydrolase that promotes the GTP-dependent binding of aminoacyl-tRNA to the A-site of ribosomes during protein biosynthesis. The chain is Elongation factor Tu from Renibacterium salmoninarum (strain ATCC 33209 / DSM 20767 / JCM 11484 / NBRC 15589 / NCIMB 2235).